We begin with the raw amino-acid sequence, 393 residues long: MPHFLAKLDFKPLKYPLIEGDFCFHKEFLSLKNPTKSCVYASFKDRIFLLQKIRRANDFLIKSEKTTPLKREILKQALRIYSQSFEVISHNLQENSKHASGKKALDLGTFEDFIQKNQAPILAEIGFGSGRHLIELAKNNPTKTCLGIEIHTPSIAQALKQIELLDLKNLHILQGDGRLILESMPNYKCEKIFVHFPVPWNEKKHRRVLSEKFLNEALRVLKPRGFLELRTDDGLYFEDSLKLALKNFQCEIEIKKNAQIPVISKYEARWNKLKKDIYDLRIYSLELNETPFYNHAFDFSFDTITMSEKSVGTILKTKKIIQEGYFVHVCNIYENKGDFLVELSMGDFDWPVRLFVLLTENQIFYLNKSPLKTLNNHKAHLLLQNILSQKGIG.

Residues E124, E149, and D176 each contribute to the S-adenosyl-L-methionine site. Substrate is bound at residue D232.

This sequence belongs to the class I-like SAM-binding methyltransferase superfamily. TrmB family.

The catalysed reaction is guanosine(46) in tRNA + S-adenosyl-L-methionine = N(7)-methylguanosine(46) in tRNA + S-adenosyl-L-homocysteine. It functions in the pathway tRNA modification; N(7)-methylguanine-tRNA biosynthesis. Functionally, catalyzes the formation of N(7)-methylguanine at position 46 (m7G46) in tRNA. The polypeptide is tRNA (guanine-N(7)-)-methyltransferase (Helicobacter pylori (strain HPAG1)).